The chain runs to 138 residues: ATP synthase epsilon chain (138 aa).

The protein belongs to the ATPase epsilon chain family. In terms of assembly, F-type ATPases have 2 components, CF(1) - the catalytic core - and CF(0) - the membrane proton channel. CF(1) has five subunits: alpha(3), beta(3), gamma(1), delta(1), epsilon(1). CF(0) has three main subunits: a, b and c.

It localises to the cell inner membrane. Functionally, produces ATP from ADP in the presence of a proton gradient across the membrane. The chain is ATP synthase epsilon chain from Psychrobacter sp. (strain PRwf-1).